A 265-amino-acid polypeptide reads, in one-letter code: Undecaprenyl-diphosphatase (265 aa).

Helical transmembrane passes span 41-61 (IAYT…LIYF), 75-95 (LKFL…LYVI), 104-124 (YNPS…GIYI), 137-157 (LSTK…LPGV), 180-200 (YSYL…LLFT), 215-235 (GIAL…GFLL), and 244-264 (YLID…GLII).

The protein belongs to the UppP family.

Its subcellular location is the cell membrane. The catalysed reaction is di-trans,octa-cis-undecaprenyl diphosphate + H2O = di-trans,octa-cis-undecaprenyl phosphate + phosphate + H(+). In terms of biological role, catalyzes the dephosphorylation of undecaprenyl diphosphate (UPP). In Saccharolobus islandicus (strain Y.G.57.14 / Yellowstone #1) (Sulfolobus islandicus), this protein is Undecaprenyl-diphosphatase.